The primary structure comprises 205 residues: High frequency lysogenization protein HflD homolog (205 aa).

This sequence belongs to the HflD family.

The protein resides in the cytoplasm. The protein localises to the cell inner membrane. The protein is High frequency lysogenization protein HflD homolog of Shewanella oneidensis (strain ATCC 700550 / JCM 31522 / CIP 106686 / LMG 19005 / NCIMB 14063 / MR-1).